Consider the following 494-residue polypeptide: Bifunctional pantoate ligase/cytidylate kinase (494 aa).

The interval 1-258 is pantoate--beta-alanine ligase; sequence MHFVPTMGGL…CGSTRLIDHA (258 aa). 7–14 provides a ligand contact to ATP; sequence MGGLHHGH. The Proton donor role is filled by H14. Q41 is a binding site for (R)-pantoate. Q41 provides a ligand contact to beta-alanine. 130–133 serves as a coordination point for ATP; that stretch reads GEKD. A (R)-pantoate-binding site is contributed by Q136. ATP-binding positions include V159 and 167–170; that span reads SSSR. The cytidylate kinase stretch occupies residues 259–494; it reads FLMTRSPLVA…VGEEVWPTPV (236 aa).

This sequence in the N-terminal section; belongs to the pantothenate synthetase family. It in the C-terminal section; belongs to the cytidylate kinase family. Type 1 subfamily.

Its subcellular location is the cytoplasm. It carries out the reaction (R)-pantoate + beta-alanine + ATP = (R)-pantothenate + AMP + diphosphate + H(+). The catalysed reaction is CMP + ATP = CDP + ADP. The enzyme catalyses dCMP + ATP = dCDP + ADP. It participates in cofactor biosynthesis; (R)-pantothenate biosynthesis; (R)-pantothenate from (R)-pantoate and beta-alanine: step 1/1. Functionally, catalyzes the condensation of pantoate with beta-alanine in an ATP-dependent reaction via a pantoyl-adenylate intermediate. Catalyzes the transfer of a phosphate group from ATP to either CMP or dCMP to form CDP or dCDP and ADP, respectively. The sequence is that of Bifunctional pantoate ligase/cytidylate kinase from Synechococcus sp. (strain CC9311).